Consider the following 399-residue polypeptide: PCI domain-containing protein 2 (399 aa).

The PCI domain maps to valine 210–proline 391.

The protein belongs to the CSN12 family.

The polypeptide is PCI domain-containing protein 2 (pcid2) (Danio rerio (Zebrafish)).